Consider the following 401-residue polypeptide: Formate-dependent phosphoribosylglycinamide formyltransferase (401 aa).

N(1)-(5-phospho-beta-D-ribosyl)glycinamide-binding positions include 22-23 and E82; that span reads EL. Residues R115, K157, 162–167, 197–200, and E205 contribute to the ATP site; these read SSGKGQ and EGFI. The region spanning 120-315 is the ATP-grasp domain; it reads RLAAESLGLP…EFELHARAIL (196 aa). The Mg(2+) site is built by E274 and E286. Residues D293, K362, and 369–370 each bind N(1)-(5-phospho-beta-D-ribosyl)glycinamide; that span reads RR.

The protein belongs to the PurK/PurT family. As to quaternary structure, homodimer.

It catalyses the reaction N(1)-(5-phospho-beta-D-ribosyl)glycinamide + formate + ATP = N(2)-formyl-N(1)-(5-phospho-beta-D-ribosyl)glycinamide + ADP + phosphate + H(+). Its pathway is purine metabolism; IMP biosynthesis via de novo pathway; N(2)-formyl-N(1)-(5-phospho-D-ribosyl)glycinamide from N(1)-(5-phospho-D-ribosyl)glycinamide (formate route): step 1/1. Its function is as follows. Involved in the de novo purine biosynthesis. Catalyzes the transfer of formate to 5-phospho-ribosyl-glycinamide (GAR), producing 5-phospho-ribosyl-N-formylglycinamide (FGAR). Formate is provided by PurU via hydrolysis of 10-formyl-tetrahydrofolate. The protein is Formate-dependent phosphoribosylglycinamide formyltransferase of Cupriavidus taiwanensis (strain DSM 17343 / BCRC 17206 / CCUG 44338 / CIP 107171 / LMG 19424 / R1) (Ralstonia taiwanensis (strain LMG 19424)).